Here is an 84-residue protein sequence, read N- to C-terminus: Envelope glycoprotein N (84 aa).

The first 26 residues, 1-26, serve as a signal peptide directing secretion; sequence MSCKKSARQSLYVSLCLFYILVFAAA. Residues 27–47 are Virion surface-facing; that stretch reads TEVDFYSPECHSHTYEIVLNS. A helical transmembrane segment spans residues 48 to 68; sequence FSSIWLLINLFLLLCSFAIFL. The Intravirion segment spans residues 69-84; sequence KYWCYKTFASETVKGY.

The protein belongs to the herpesviridae glycoprotein N family. As to quaternary structure, interacts (via N-terminus) with gM (via N-terminus). The gM-gN heterodimer forms the gCII complex.

The protein localises to the virion membrane. The protein resides in the host membrane. It is found in the host Golgi apparatus. Its subcellular location is the host trans-Golgi network. In terms of biological role, envelope glycoprotein necessary for proper maturation of gM and modulation of its membrane fusion activity. Also plays a critical role in virion morphogenesis. This Homo sapiens (Human) protein is Envelope glycoprotein N.